The following is a 180-amino-acid chain: uncharacterized protein (180 aa).

Helical transmembrane passes span 4–24, 25–45, 57–77, 81–101, 124–144, and 156–176; these read KSNI…LSLF, IKNF…WLFI, NLLA…GIIY, FLDI…GILF, FLTL…LLIL, and IIRT…FYTF.

The protein resides in the cell membrane. This is an uncharacterized protein from Methanocaldococcus jannaschii (strain ATCC 43067 / DSM 2661 / JAL-1 / JCM 10045 / NBRC 100440) (Methanococcus jannaschii).